Reading from the N-terminus, the 290-residue chain is Light-independent protochlorophyllide reductase iron-sulfur ATP-binding protein (290 aa).

ATP contacts are provided by residues 10-15 (GIGKST) and K39. S14 is a binding site for Mg(2+). [4Fe-4S] cluster is bound by residues C95 and C129. 180–181 (NR) is a binding site for ATP.

The protein belongs to the NifH/BchL/ChlL family. Homodimer. Protochlorophyllide reductase is composed of three subunits; ChlL, ChlN and ChlB. The cofactor is [4Fe-4S] cluster.

The protein resides in the plastid. It is found in the chloroplast. It catalyses the reaction chlorophyllide a + oxidized 2[4Fe-4S]-[ferredoxin] + 2 ADP + 2 phosphate = protochlorophyllide a + reduced 2[4Fe-4S]-[ferredoxin] + 2 ATP + 2 H2O. It functions in the pathway porphyrin-containing compound metabolism; chlorophyll biosynthesis (light-independent). In terms of biological role, component of the dark-operative protochlorophyllide reductase (DPOR) that uses Mg-ATP and reduced ferredoxin to reduce ring D of protochlorophyllide (Pchlide) to form chlorophyllide a (Chlide). This reaction is light-independent. The L component serves as a unique electron donor to the NB-component of the complex, and binds Mg-ATP. The sequence is that of Light-independent protochlorophyllide reductase iron-sulfur ATP-binding protein from Zygnema circumcarinatum (Green alga).